The sequence spans 209 residues: dTTP/UTP pyrophosphatase (209 aa).

The active-site Proton acceptor is Asp79.

This sequence belongs to the Maf family. YhdE subfamily. It depends on a divalent metal cation as a cofactor.

The protein localises to the cytoplasm. The enzyme catalyses dTTP + H2O = dTMP + diphosphate + H(+). The catalysed reaction is UTP + H2O = UMP + diphosphate + H(+). In terms of biological role, nucleoside triphosphate pyrophosphatase that hydrolyzes dTTP and UTP. May have a dual role in cell division arrest and in preventing the incorporation of modified nucleotides into cellular nucleic acids. The protein is dTTP/UTP pyrophosphatase of Chelativorans sp. (strain BNC1).